Consider the following 185-residue polypeptide: Ribosome-recycling factor (185 aa).

Positions 137-162 (DSIDKMVKDGEVGEDEGRRAEKELDD) are disordered.

It belongs to the RRF family.

It is found in the cytoplasm. Its function is as follows. Responsible for the release of ribosomes from messenger RNA at the termination of protein biosynthesis. May increase the efficiency of translation by recycling ribosomes from one round of translation to another. In Streptomyces coelicolor (strain ATCC BAA-471 / A3(2) / M145), this protein is Ribosome-recycling factor.